A 416-amino-acid chain; its full sequence is Iron/alpha-ketoglutarate-dependent dioxygenase asqJ (416 aa).

Residues 1–53 (MGYPKAFTSSDSEPEPDLSRDLGNPVMGNPGVVSRSSSTVAQHSVRNNPTGPD) form a disordered region. Positions 34 to 50 (SRSSSTVAQHSVRNNPT) are enriched in polar residues. His-242, Asp-244, and His-319 together coordinate Fe cation.

Belongs to the PhyH family. Homodimer. Fe cation is required as a cofactor.

The catalysed reaction is (-)-4'-methoxycyclopeptine + 2-oxoglutarate + O2 = (Z)-4'-methoxydehydrocyclopeptine + succinate + CO2 + H2O. It carries out the reaction (Z)-4'-methoxydehydrocyclopeptine + 2-oxoglutarate + O2 = (-)-4'-methoxycyclopenine + succinate + CO2. The enzyme catalyses (-)-cyclopeptine + 2-oxoglutarate + O2 = (Z)-dehydrocyclopeptine + succinate + CO2 + H2O. It catalyses the reaction (Z)-dehydrocyclopeptine + 2-oxoglutarate + O2 = (-)-cyclopenine + succinate + CO2. Its pathway is secondary metabolite biosynthesis. It participates in alkaloid biosynthesis. It functions in the pathway mycotoxin biosynthesis. Iron/alpha-ketoglutarate-dependent dioxygenase; part of the gene cluster that mediates the biosynthesis of the aspoquinolone mycotoxins. Within the pathway, the iron/alpha-ketoglutarate-dependent dioxygenase asqJ acts as a (-)-cyclopenine synthase that converts 4'-methoxycyclopeptin into 4'-methoxydehydrocyclopeptin through dehydrogenation to form a double bond between C-alpha and C-beta of the O-methyltyrosine side chain. AsqJ is a very unique dioxygenase which is capable of catalyzing radical-mediated dehydrogenation and epoxidation reactions sequentially on a 6,7-benzo-diazepinedione substrate in the 4'-methoxyviridicatin biosynthetic pathway. AsqJ is also capable of converting cyclopeptin into dehydrocyclopeptin. The first step of the pathway is catalyzed by the nonribosomal peptide synthetase asqK that condenses anthranilic acid and O-methyl-L-tyrosine to produce 4'-methoxycyclopeptin. 4'-methoxycyclopeptin is then converted to 4'-methoxydehydrocyclopeptin by the ketoglutarate-dependent dioxygenase asqJ. AsqJ also converts its first product 4'-methoxydehydrocyclopeptin to 4'-methoxycyclopenin. The following conversion of 4'-methoxycyclopenin into 4'-methoxyviridicatin is catalyzed by the cyclopenase asqI. 4'-methoxyviridicatin is the precursor of quinolone natural products, and is further converted to quinolinone B. The prenyltransferase asqH1 then catalyzes the canonical Friedel-Crafts alkylation of quinolinone B with dimethylallyl cation to yield dimethylallyl quinolone, which is subjected to FAD-dependent dehydrogenation by the FAD-linked oxidoreductase asqF to yield conjugated aryl diene. The delta(3') double bond then serves as the site of the second alkylation with DMAPP catalyzed by the prenyltransferase asqH2 to yield a carbenium ion intermediate, which can be attacked by H(2)O to yield a styrenyl quinolone containing a C3'-hydroxyprenyl chain. The FAD-dependent monooxygenase asqG performs epoxidation of the terminal C7'-C8' olefin. Finally, after dehydratation of the epoxide at C3 by asqC, the quinolone epoxide rearrangement protein asqO catalyzes an enzymatic 3-exo-tet cyclization to yield the cyclopropyl-THF ring system in aspoquinolone. The protein is Iron/alpha-ketoglutarate-dependent dioxygenase asqJ of Emericella nidulans (strain FGSC A4 / ATCC 38163 / CBS 112.46 / NRRL 194 / M139) (Aspergillus nidulans).